The sequence spans 210 residues: tRNA (guanine-N(7)-)-methyltransferase (210 aa).

Glutamate 36, glutamate 61, aspartate 90, and aspartate 112 together coordinate S-adenosyl-L-methionine. The active site involves aspartate 112. Substrate is bound by residues lysine 116, aspartate 148, and 188–191; that span reads TEYE.

This sequence belongs to the class I-like SAM-binding methyltransferase superfamily. TrmB family.

The catalysed reaction is guanosine(46) in tRNA + S-adenosyl-L-methionine = N(7)-methylguanosine(46) in tRNA + S-adenosyl-L-homocysteine. The protein operates within tRNA modification; N(7)-methylguanine-tRNA biosynthesis. Functionally, catalyzes the formation of N(7)-methylguanine at position 46 (m7G46) in tRNA. The polypeptide is tRNA (guanine-N(7)-)-methyltransferase (Mycoplasma pneumoniae (strain ATCC 29342 / M129 / Subtype 1) (Mycoplasmoides pneumoniae)).